The sequence spans 75 residues: MPIIGVPRCLIKPFSVPVTFPFSVKKNIRILDLDPRTEAYCLSLNSVCFKRLPRRKYFHLLNSYNIKRVLGVVYC.

This sequence belongs to the UPF0377 family.

The protein is Putative UPF0377 protein YAL067W-A of Saccharomyces cerevisiae (strain ATCC 204508 / S288c) (Baker's yeast).